The chain runs to 266 residues: Acetyl esterase (266 aa).

The polypeptide is Acetyl esterase (xynC) (Caldicellulosiruptor saccharolyticus (Caldocellum saccharolyticum)).